We begin with the raw amino-acid sequence, 186 residues long: LSM12 homolog B (186 aa).

Positions 1-74 (MSSLAPCFTV…CMDIEIVKEA (74 aa)) constitute a Sm domain. Residues 84 to 186 (EPIDLPMIRE…VVQNFCSKQF (103 aa)) enclose the AD domain.

The protein belongs to the LSM12 family. In terms of assembly, interacts with Sbat; along with Sbat and Vlet, may form an accessory subcomplex involved in SMN complex function.

May have an accessory function in the survival motor neuron (SMN) complex. The sequence is that of LSM12 homolog B from Drosophila melanogaster (Fruit fly).